Consider the following 395-residue polypeptide: Enoyl-[acyl-carrier-protein] reductase [NADH] (395 aa).

NAD(+) is bound by residues 48-53, 74-75, 111-112, and 139-140; these read GASTGY, FE, DA, and LA. Tyr-225 contacts substrate. Residue Tyr-235 is the Proton donor of the active site. NAD(+) is bound by residues Lys-244 and 273–275; that span reads LVT.

It belongs to the TER reductase family. In terms of assembly, monomer.

The enzyme catalyses a 2,3-saturated acyl-[ACP] + NAD(+) = a (2E)-enoyl-[ACP] + NADH + H(+). Its pathway is lipid metabolism; fatty acid biosynthesis. Functionally, involved in the final reduction of the elongation cycle of fatty acid synthesis (FAS II). Catalyzes the reduction of a carbon-carbon double bond in an enoyl moiety that is covalently linked to an acyl carrier protein (ACP). This is Enoyl-[acyl-carrier-protein] reductase [NADH] from Saccharophagus degradans (strain 2-40 / ATCC 43961 / DSM 17024).